Reading from the N-terminus, the 348-residue chain is tRNA N6-adenosine threonylcarbamoyltransferase (348 aa).

Positions 109 and 113 each coordinate Fe cation. Substrate is bound by residues 136-140, aspartate 169, glycine 182, aspartate 186, and asparagine 284; that span reads TVSGG. Position 312 (aspartate 312) interacts with Fe cation.

It belongs to the KAE1 / TsaD family. The cofactor is Fe(2+).

It localises to the cytoplasm. It catalyses the reaction L-threonylcarbamoyladenylate + adenosine(37) in tRNA = N(6)-L-threonylcarbamoyladenosine(37) in tRNA + AMP + H(+). Functionally, required for the formation of a threonylcarbamoyl group on adenosine at position 37 (t(6)A37) in tRNAs that read codons beginning with adenine. Is involved in the transfer of the threonylcarbamoyl moiety of threonylcarbamoyl-AMP (TC-AMP) to the N6 group of A37, together with TsaE and TsaB. TsaD likely plays a direct catalytic role in this reaction. The polypeptide is tRNA N6-adenosine threonylcarbamoyltransferase (Chlorobium luteolum (strain DSM 273 / BCRC 81028 / 2530) (Pelodictyon luteolum)).